The chain runs to 160 residues: Cytochrome b6-f complex subunit 4 (160 aa).

A run of 3 helical transmembrane segments spans residues 36–56 (LLYI…GLAV), 95–115 (LLGI…PFIE), and 131–151 (SVFL…CLPI).

It belongs to the cytochrome b family. PetD subfamily. The 4 large subunits of the cytochrome b6-f complex are cytochrome b6, subunit IV (17 kDa polypeptide, PetD), cytochrome f and the Rieske protein, while the 4 small subunits are PetG, PetL, PetM and PetN. The complex functions as a dimer.

Its subcellular location is the cellular thylakoid membrane. Functionally, component of the cytochrome b6-f complex, which mediates electron transfer between photosystem II (PSII) and photosystem I (PSI), cyclic electron flow around PSI, and state transitions. The chain is Cytochrome b6-f complex subunit 4 from Prochlorococcus marinus subsp. pastoris (strain CCMP1986 / NIES-2087 / MED4).